Reading from the N-terminus, the 314-residue chain is uncharacterized protein (314 aa).

The segment at 1-71 (MAGNSQRRGA…QRAGRKADET (71 aa)) is disordered. 3 residues coordinate S-adenosyl-L-methionine: Gly-266, Ile-286, and Leu-295.

This sequence belongs to the class IV-like SAM-binding methyltransferase superfamily. RNA methyltransferase TrmH family.

This is an uncharacterized protein from Mycolicibacterium smegmatis (strain ATCC 700084 / mc(2)155) (Mycobacterium smegmatis).